The chain runs to 240 residues: Eukaryotic translation initiation factor 3 subunit K (240 aa).

One can recognise a PCI domain in the interval 41-221 (YDKDIVLTIL…TIKTRNIDEK (181 aa)).

This sequence belongs to the eIF-3 subunit K family. As to quaternary structure, component of the eukaryotic translation initiation factor 3 (eIF-3) complex.

The protein resides in the cytoplasm. Its function is as follows. Component of the eukaryotic translation initiation factor 3 (eIF-3) complex, which is involved in protein synthesis of a specialized repertoire of mRNAs and, together with other initiation factors, stimulates binding of mRNA and methionyl-tRNAi to the 40S ribosome. The eIF-3 complex specifically targets and initiates translation of a subset of mRNAs involved in cell proliferation. This is Eukaryotic translation initiation factor 3 subunit K from Caenorhabditis elegans.